The following is a 232-amino-acid chain: Ribose-5-phosphate isomerase A (232 aa).

Residues 31–34 (TGST), 88–91 (DGAD), and 101–104 (KGGG) each bind substrate. The active-site Proton acceptor is E110. K128 provides a ligand contact to substrate.

The protein belongs to the ribose 5-phosphate isomerase family. Homodimer.

It catalyses the reaction aldehydo-D-ribose 5-phosphate = D-ribulose 5-phosphate. It participates in carbohydrate degradation; pentose phosphate pathway; D-ribose 5-phosphate from D-ribulose 5-phosphate (non-oxidative stage): step 1/1. In terms of biological role, catalyzes the reversible conversion of ribose-5-phosphate to ribulose 5-phosphate. This is Ribose-5-phosphate isomerase A from Lactobacillus johnsonii (strain CNCM I-12250 / La1 / NCC 533).